The sequence spans 86 residues: MELKHSISDYTEAEFLEFVKKICRAEGATEEDDNKLVREFERLTEHPDGSDLIYYPRDDREDSPEGIVKEIKEWRAANGKSGFKQG.

This sequence belongs to the colicins ColE2/ColE8/ColE9 and pyocins S1/S2 family.

This protein is able to protect a cell, which harbors the plasmid ColE2 encoding colicin E2, against colicin E2. The sequence is that of Colicin-E2 immunity protein (imm) from Escherichia coli.